Consider the following 88-residue polypeptide: Centromere protein W (88 aa).

This sequence belongs to the CENP-W/WIP1 family. As to quaternary structure, heterodimer with CENPT; this dimer coassembles with CENPS-CENPX heterodimers at centromeres to form the tetrameric CENP-T-W-S-X complex, which is a subcomplex of the large constitutive centromere-associated network (CCAN, also known as the interphase centromere complex or ICEN). Interacts with NPM1. In terms of tissue distribution, highly expressed in ovary, liver, lung and pancreas and to a lower extent in breast and gastrointestinal tract cancers; such as those of the colon, rectum and stomach. Overexpressed in high grade breast invasive tumors. Expressed in many cancer cell types.

It localises to the nucleus. Its subcellular location is the chromosome. The protein resides in the centromere. The protein localises to the kinetochore. It is found in the nucleus matrix. It localises to the nucleolus. Component of the CENPA-NAC (nucleosome-associated) complex, a complex that plays a central role in assembly of kinetochore proteins, mitotic progression and chromosome segregation. The CENPA-NAC complex recruits the CENPA-CAD (nucleosome distal) complex and may be involved in incorporation of newly synthesized CENPA into centromeres. Part of a nucleosome-associated complex that binds specifically to histone H3-containing nucleosomes at the centromere, as opposed to nucleosomes containing CENPA. Component of the heterotetrameric CENP-T-W-S-X complex that binds and supercoils DNA, and plays an important role in kinetochore assembly. CENPW has a fundamental role in kinetochore assembly and function. It is one of the inner kinetochore proteins, with most further proteins binding downstream. Required for normal chromosome organization and normal progress through mitosis. The polypeptide is Centromere protein W (CENPW) (Homo sapiens (Human)).